Here is a 150-residue protein sequence, read N- to C-terminus: UPF0178 protein PSEEN5341 (150 aa).

It belongs to the UPF0178 family.

The polypeptide is UPF0178 protein PSEEN5341 (Pseudomonas entomophila (strain L48)).